We begin with the raw amino-acid sequence, 509 residues long: Steroid 17-alpha-hydroxylase/17,20 lyase (509 aa).

Asparagine 202 lines the substrate pocket. A heme-binding site is contributed by cysteine 442.

Belongs to the cytochrome P450 family. Requires heme as cofactor.

It is found in the endoplasmic reticulum membrane. Its subcellular location is the microsome membrane. It catalyses the reaction a C21-steroid + reduced [NADPH--hemoprotein reductase] + O2 = a 17alpha-hydroxy-C21-steroid + oxidized [NADPH--hemoprotein reductase] + H2O + H(+). The enzyme catalyses progesterone + reduced [NADPH--hemoprotein reductase] + O2 = 17alpha-hydroxyprogesterone + oxidized [NADPH--hemoprotein reductase] + H2O + H(+). It carries out the reaction pregnenolone + reduced [NADPH--hemoprotein reductase] + O2 = 17alpha-hydroxypregnenolone + oxidized [NADPH--hemoprotein reductase] + H2O + H(+). The catalysed reaction is 17alpha-hydroxyprogesterone + reduced [NADPH--hemoprotein reductase] + O2 = androst-4-ene-3,17-dione + acetate + oxidized [NADPH--hemoprotein reductase] + H2O + 2 H(+). It catalyses the reaction 17alpha-hydroxyprogesterone + reduced [NADPH--hemoprotein reductase] + O2 = 16alpha,17alpha-dihydroxyprogesterone + oxidized [NADPH--hemoprotein reductase] + H2O + H(+). The enzyme catalyses 16alpha,17alpha-dihydroxyprogesterone + reduced [NADPH--hemoprotein reductase] + O2 = 6beta,16alpha,17alpha-trihydroxyprogesterone + oxidized [NADPH--hemoprotein reductase] + H2O + H(+). It carries out the reaction 17alpha-hydroxypregnenolone + reduced [NADPH--hemoprotein reductase] + O2 = 3beta-hydroxyandrost-5-en-17-one + acetate + oxidized [NADPH--hemoprotein reductase] + H2O + 2 H(+). The catalysed reaction is 16alpha,17alpha-dihydroxypregnenolone + reduced [NADPH--hemoprotein reductase] + O2 = 3beta,16alpha-dihydroxy-androst-5-en-17-one + acetate + oxidized [NADPH--hemoprotein reductase] + H2O + 2 H(+). It catalyses the reaction 3beta-hydroxyandrost-5-en-17-one + reduced [NADPH--hemoprotein reductase] + O2 = 3beta,16alpha-dihydroxy-androst-5-en-17-one + oxidized [NADPH--hemoprotein reductase] + H2O + H(+). The enzyme catalyses androst-4-ene-3,17-dione + reduced [NADPH--hemoprotein reductase] + O2 = 16alpha-hydroxyandrost-4-ene-3,17-dione + oxidized [NADPH--hemoprotein reductase] + H2O + H(+). The protein operates within steroid hormone biosynthesis. Its pathway is steroid biosynthesis; glucocorticoid biosynthesis. Its activity is regulated as follows. Regulated predominantly by intracellular cAMP levels. The 17,20-lyase activity is stimulated by cytochrome b5, which acts as an allosteric effector increasing the Vmax of the lyase activity. Functionally, a cytochrome P450 monooxygenase involved in corticoid and androgen biosynthesis. Catalyzes 17-alpha hydroxylation of C21 steroids, which is common for both pathways. A second oxidative step, required only for androgen synthesis, involves an acyl-carbon cleavage. The 17-alpha hydroxy intermediates, as part of adrenal glucocorticoids biosynthesis pathway, are precursors of cortisol. Hydroxylates steroid hormones, pregnenolone and progesterone to form 17-alpha hydroxy metabolites, followed by the cleavage of the C17-C20 bond to form C19 steroids, dehydroepiandrosterone (DHEA) and androstenedione. Has 16-alpha hydroxylase activity. Catalyzes 16-alpha hydroxylation of 17-alpha hydroxy pregnenolone, followed by the cleavage of the C17-C20 bond to form 16-alpha-hydroxy DHEA. Also 16-alpha hydroxylates androgens, relevant for estriol synthesis. Mechanistically, uses molecular oxygen inserting one oxygen atom into a substrate, and reducing the second into a water molecule, with two electrons provided by NADPH via cytochrome P450 reductase (CPR; NADPH-ferrihemoprotein reductase). This chain is Steroid 17-alpha-hydroxylase/17,20 lyase (CYP17A1), found in Sus scrofa (Pig).